A 294-amino-acid polypeptide reads, in one-letter code: N-acetylmuramic acid 6-phosphate etherase (294 aa).

In terms of domain architecture, SIS spans 54-217; it reads VIKSFEEEGR…STASMIGVGK (164 aa). Glutamate 82 functions as the Proton donor in the catalytic mechanism. Residue glutamate 113 is part of the active site.

Belongs to the GCKR-like family. MurNAc-6-P etherase subfamily. As to quaternary structure, homodimer.

The enzyme catalyses N-acetyl-D-muramate 6-phosphate + H2O = N-acetyl-D-glucosamine 6-phosphate + (R)-lactate. It functions in the pathway amino-sugar metabolism; N-acetylmuramate degradation. In terms of biological role, specifically catalyzes the cleavage of the D-lactyl ether substituent of MurNAc 6-phosphate, producing GlcNAc 6-phosphate and D-lactate. In Bacillus cereus (strain ATCC 10987 / NRS 248), this protein is N-acetylmuramic acid 6-phosphate etherase.